The sequence spans 59 residues: uncharacterized protein (59 aa).

This is an uncharacterized protein from Acidianus hospitalis (AFV-1).